The sequence spans 414 residues: Cytochrome c biogenesis protein Ccs1 (414 aa).

The next 3 helical transmembrane spans lie at 14 to 34, 73 to 93, and 159 to 179; these read LTVAIIILLAIALASALGTVI, SWWFIFLIILLLLSLTLCTIT, and VSPIIVHFSLVIVLIGSMLST.

It belongs to the Ccs1/CcsB family. In terms of assembly, may interact with CcsA.

The protein resides in the plastid. It localises to the chloroplast thylakoid membrane. Its function is as follows. Required during biogenesis of c-type cytochromes (cytochrome c6 and cytochrome f) at the step of heme attachment. The chain is Cytochrome c biogenesis protein Ccs1 from Guillardia theta (Cryptophyte).